We begin with the raw amino-acid sequence, 72 residues long: UPF0154 protein BH2350 (72 aa).

The helical transmembrane segment at 3–23 (WMILLWITLGIVIGIAIGFFI) threads the bilayer.

This sequence belongs to the UPF0154 family.

Its subcellular location is the membrane. This is UPF0154 protein BH2350 from Halalkalibacterium halodurans (strain ATCC BAA-125 / DSM 18197 / FERM 7344 / JCM 9153 / C-125) (Bacillus halodurans).